We begin with the raw amino-acid sequence, 563 residues long: Arginine--tRNA ligase (563 aa).

The 'HIGH' region motif lies at 121–131 (PNIAKPMSMGH).

The protein belongs to the class-I aminoacyl-tRNA synthetase family. As to quaternary structure, monomer.

It localises to the cytoplasm. The enzyme catalyses tRNA(Arg) + L-arginine + ATP = L-arginyl-tRNA(Arg) + AMP + diphosphate. The polypeptide is Arginine--tRNA ligase (Leuconostoc mesenteroides subsp. mesenteroides (strain ATCC 8293 / DSM 20343 / BCRC 11652 / CCM 1803 / JCM 6124 / NCDO 523 / NBRC 100496 / NCIMB 8023 / NCTC 12954 / NRRL B-1118 / 37Y)).